The sequence spans 321 residues: Transcriptional activator protein Pur-alpha (321 aa).

Positions 1 to 54 are disordered; sequence MADRDSGSEQGGAALGSGGSLGHPGSGSGSGGGGGGGGGGGGSGGGGGAPGGLQ. Alanine 2 is modified (N-acetylalanine). The segment covering 9 to 51 has biased composition (gly residues); that stretch reads EQGGAALGSGGSLGHPGSGSGSGGGGGGGGGGGGSGGGGGAPG. At serine 181 the chain carries Phosphoserine. Residues 294–313 are compositionally biased toward low complexity; the sequence is LHQQQQQQQEETTAATLLLQ. Residues 294–321 form a disordered region; that stretch reads LHQQQQQQQEETTAATLLLQGEEEGEED.

The protein belongs to the PUR DNA-binding protein family. Homodimer, heterodimer with PURB and heterotrimer with PURB and YBX1/Y-box protein 1. Interacts with FMR1; this interaction occurs in association with polyribosome.

Its subcellular location is the nucleus. Its function is as follows. This is a probable transcription activator that specifically binds the purine-rich single strand of the PUR element located upstream of the c-Myc gene. May play a role in the initiation of DNA replication and in recombination. In Mus musculus (Mouse), this protein is Transcriptional activator protein Pur-alpha (Pura).